A 100-amino-acid chain; its full sequence is Urease subunit gamma (100 aa).

This sequence belongs to the urease gamma subunit family. Heterotrimer of UreA (gamma), UreB (beta) and UreC (alpha) subunits. Three heterotrimers associate to form the active enzyme.

It is found in the cytoplasm. The catalysed reaction is urea + 2 H2O + H(+) = hydrogencarbonate + 2 NH4(+). It participates in nitrogen metabolism; urea degradation; CO(2) and NH(3) from urea (urease route): step 1/1. This Parasynechococcus marenigrum (strain WH8102) protein is Urease subunit gamma.